Consider the following 604-residue polypeptide: Nuclear factor erythroid 2-related factor 2 (604 aa).

The DLG motif motif lies at 29–31 (DLG). Phosphoserine; by PKC is present on Ser40. Positions 79-82 (ETGE) match the ETGE motif motif. Residue Ser214 is modified to Phosphoserine. Residues 334–447 (TVEFNDSDSG…VPFTKDKHSS (114 aa)) are disordered. Polar residues-rich tracts occupy residues 340-352 (SDSG…SPSR) and 395-407 (PTHS…QPLS). Lys461, Lys471, and Lys486 each carry an N-linked (Glc) (glycation) lysine glycan. The 64-residue stretch at 496–559 (LIRDIRRRGK…HLLKRKLSTL (64 aa)) folds into the bZIP domain. Arg498 carries N-linked (Glc) (glycation) arginine glycosylation. The segment at 498 to 517 (RDIRRRGKNKVAAQNCRKRK) is basic motif. The tract at residues 521-528 (IVELEQDL) is leucine-zipper. Arg568 carries an N-linked (Glc) (glycation) arginine glycan. A disordered region spans residues 570 to 604 (EDGKPYSPSEYSLQQTRDGNVFLVPKSKKPDTKKN). Lys573 carries N-linked (Glc) (glycation) lysine glycosylation. Over residues 578–587 (SEYSLQQTRD) the composition is skewed to polar residues. Residues 590–595 (VFLVPK) are mediates interaction with CHD6 and is necessary to activate transcription. Residues Lys595 and Lys598 each carry the N6-acetyllysine; by CREBBP modification.

Belongs to the bZIP family. CNC subfamily. As to quaternary structure, heterodimer; heterodimerizes with small Maf proteins. Interacts (via the bZIP domain) with MAFG and MAFK; required for binding to antioxidant response elements (AREs) on DNA. Interacts with KEAP1; the interaction is direct and promotes ubiquitination by the BCR(KEAP1) E3 ubiquitin ligase complex. Forms a ternary complex with PGAM5 and KEAP1. Interacts with EEF1D at heat shock promoter elements (HSE). Interacts via its leucine-zipper domain with the coiled-coil domain of PMF1. Interacts with CHD6; involved in activation of the transcription. Interacts with ESRRB; represses NFE2L2 transcriptional activity. Interacts with MOTS-c, a peptide produced by the mitochondrially encoded 12S rRNA MT-RNR1; the interaction occurs in the nucleus following metabolic stress. In terms of processing, ubiquitinated in the cytoplasm by the BCR(KEAP1) E3 ubiquitin ligase complex leading to its degradation. In response to oxidative stress, electrophile metabolites, such as sulforaphane, modify KEAP1, leading to inhibit activity of the BCR(KEAP1) complex, promoting NFE2L2/NRF2 nuclear accumulation and activity. In response to autophagy, the BCR(KEAP1) complex is inactivated. Phosphorylated by EIF2AK3/PERK following unfolded protein response (UPR), promoting dissociation from its cytoplasmic inhibitor KEAP1, followed by its translocation into the nucleus. Phosphorylation of Ser-40 by PKC in response to oxidative stress dissociates NFE2L2 from its cytoplasmic inhibitor KEAP1, promoting its translocation into the nucleus. Post-translationally, acetylation at Lys-595 and Lys-598 increases nuclear localization whereas deacetylation by SIRT1 enhances cytoplasmic presence. In terms of processing, glycation impairs transcription factor activity by preventing heterodimerization with small Maf proteins. Deglycation by FN3K restores activity.

It is found in the cytoplasm. It localises to the cytosol. The protein resides in the nucleus. Its function is as follows. Transcription factor that plays a key role in the response to oxidative stress: binds to antioxidant response (ARE) elements present in the promoter region of many cytoprotective genes, such as phase 2 detoxifying enzymes, and promotes their expression, thereby neutralizing reactive electrophiles. In normal conditions, ubiquitinated and degraded in the cytoplasm by the BCR(KEAP1) complex. In response to oxidative stress, electrophile metabolites inhibit activity of the BCR(KEAP1) complex, promoting nuclear accumulation of NFE2L2/NRF2, heterodimerization with one of the small Maf proteins and binding to ARE elements of cytoprotective target genes. The NFE2L2/NRF2 pathway is also activated in response to selective autophagy: autophagy promotes interaction between KEAP1 and SQSTM1/p62 and subsequent inactivation of the BCR(KEAP1) complex, leading to NFE2L2/NRF2 nuclear accumulation and expression of cytoprotective genes. The NFE2L2/NRF2 pathway is also activated during the unfolded protein response (UPR), contributing to redox homeostasis and cell survival following endoplasmic reticulum stress. May also be involved in the transcriptional activation of genes of the beta-globin cluster by mediating enhancer activity of hypersensitive site 2 of the beta-globin locus control region. Also plays an important role in the regulation of the innate immune response. It is a critical regulator of the innate immune response and survival during sepsis by maintaining redox homeostasis and restraint of the dysregulation of pro-inflammatory signaling pathways like MyD88-dependent and -independent and TNF-alpha signaling. Suppresses macrophage inflammatory response by blocking pro-inflammatory cytokine transcription and the induction of IL6. Binds to the proximity of pro-inflammatory genes in macrophages and inhibits RNA Pol II recruitment. The inhibition is independent of the Nrf2-binding motif and reactive oxygen species level. Represses antiviral cytosolic DNA sensing by suppressing the expression of the adapter protein STING1 and decreasing responsiveness to STING1 agonists while increasing susceptibility to infection with DNA viruses. The sequence is that of Nuclear factor erythroid 2-related factor 2 from Rattus norvegicus (Rat).